Reading from the N-terminus, the 221-residue chain is uncharacterized protein (221 aa).

The first 26 residues, 1-26 (MVRLVPRAFAATVALLAAGFSPATAS), serve as a signal peptide directing secretion.

This is an uncharacterized protein from Mycobacterium tuberculosis (strain ATCC 25618 / H37Rv).